The sequence spans 379 residues: Protein-glutamate methylesterase/protein-glutamine glutaminase (379 aa).

Positions 4-121 (KILVVDDSIF…AANRQDAVAL (118 aa)) constitute a Response regulatory domain. Aspartate 55 carries the 4-aspartylphosphate modification. The CheB-type methylesterase domain maps to 186-379 (SGKKYRCLAI…FESHILKEMA (194 aa)). Residues serine 198, histidine 225, and aspartate 323 contribute to the active site.

It belongs to the CheB family. In terms of processing, phosphorylated by CheA. Phosphorylation of the N-terminal regulatory domain activates the methylesterase activity.

It localises to the cytoplasm. The enzyme catalyses [protein]-L-glutamate 5-O-methyl ester + H2O = L-glutamyl-[protein] + methanol + H(+). It catalyses the reaction L-glutaminyl-[protein] + H2O = L-glutamyl-[protein] + NH4(+). In terms of biological role, involved in chemotaxis. Part of a chemotaxis signal transduction system that modulates chemotaxis in response to various stimuli. Catalyzes the demethylation of specific methylglutamate residues introduced into the chemoreceptors (methyl-accepting chemotaxis proteins or MCP) by CheR. Also mediates the irreversible deamidation of specific glutamine residues to glutamic acid. This chain is Protein-glutamate methylesterase/protein-glutamine glutaminase, found in Pseudoalteromonas atlantica (strain T6c / ATCC BAA-1087).